The primary structure comprises 268 residues: Tryptophan synthase alpha chain (268 aa).

Residues Glu49 and Asp60 each act as proton acceptor in the active site.

Belongs to the TrpA family. In terms of assembly, tetramer of two alpha and two beta chains.

It catalyses the reaction (1S,2R)-1-C-(indol-3-yl)glycerol 3-phosphate + L-serine = D-glyceraldehyde 3-phosphate + L-tryptophan + H2O. The protein operates within amino-acid biosynthesis; L-tryptophan biosynthesis; L-tryptophan from chorismate: step 5/5. The alpha subunit is responsible for the aldol cleavage of indoleglycerol phosphate to indole and glyceraldehyde 3-phosphate. In Escherichia coli O17:K52:H18 (strain UMN026 / ExPEC), this protein is Tryptophan synthase alpha chain.